We begin with the raw amino-acid sequence, 914 residues long: Solute carrier family 12 member 9 (914 aa).

At 1-36 (MASESSPLLAYRLLGEEGVALPANGAGGPGGASARK) the chain is on the cytoplasmic side. Ser-6 bears the Phosphoserine mark. Residues 37–57 (LSTFLGVVVPTVLSMFSIVVF) form a helical membrane-spanning segment. Topologically, residues 58-72 (LRIGFVVGHAGLLQA) are extracellular. Residues 73 to 93 (LAMLLVAYFILALTVLSVCAI) traverse the membrane as a helical segment. Residues 94-119 (ATNGAVQGGGAYFMISRTLGPEVGGS) are Cytoplasmic-facing. Residues 120 to 140 (IGLMFYLANVCGCAVSLLGLV) traverse the membrane as a helical segment. The Extracellular segment spans residues 141–167 (ESVLDVFGADATGPSGLRVLPQGYGWN). Residues 168–188 (LLYGSLLLGLVGGVCTLGAGL) form a helical membrane-spanning segment. The Cytoplasmic segment spans residues 189–193 (YARAS). Residues 194-214 (FLTFLLVSGSLASVLISFVAV) form a helical membrane-spanning segment. Residues 215-262 (GPRDIRLTPRPGPNGSSLPPRFGHFTGFNSSTLKDNLGAGYAEDYTTG) are Extracellular-facing. Asn-228 and Asn-243 each carry an N-linked (GlcNAc...) asparagine glycan. A helical membrane pass occupies residues 263–283 (AVMNFASVFAVLFNGCTGIMA). The Cytoplasmic segment spans residues 284–297 (GANMSGELKDPSRA). A helical membrane pass occupies residues 298–318 (IPLGTIVAVAYTFFVYVLLFF). Residues 319 to 338 (LSSFTCDRTLLQEDYGFFRA) are Extracellular-facing. The helical transmembrane segment at 339-359 (ISLWPPLVLIGIYATALSASM) threads the bilayer. The Cytoplasmic segment spans residues 360–390 (SSLIGASRILHALARDDLFGVILAPAKVVSR). Residues 391 to 411 (GGNPWAAVLYSWGLVQLVLLA) traverse the membrane as a helical segment. The Extracellular portion of the chain corresponds to 412–416 (GKLNT). A helical membrane pass occupies residues 417 to 437 (LAAVVTVFYLVAYAAVDLSCL). Over 438 to 466 (SLEWASAPNFRPTFSLFSWHTCLLGVASC) the chain is Cytoplasmic. The helical transmembrane segment at 467-487 (LLMMFLISPGAAGGSLLLMGL) threads the bilayer. Topologically, residues 488–740 (LAALLTARGG…LLRPRGGPGY (253 aa)) are extracellular. The disordered stretch occupies residues 642–678 (LTDPAFSEPADSTREGSSPALSTLFPPPRAPGSPRAL). A helical membrane pass occupies residues 741 to 761 (VDVCGLFLLQMATILGMVPAW). Residues 762–914 (HSARLRIFLC…GVTPVTCTDL (153 aa)) lie on the Cytoplasmic side of the membrane. The segment at 844–863 (QQGRGTGGGPGGPEGGDAEG) is disordered. Over residues 847–858 (RGTGGGPGGPEG) the composition is skewed to gly residues.

This sequence belongs to the SLC12A transporter family. As to quaternary structure, interacts with SLC12A1. In terms of tissue distribution, highly expressed in placenta, brain and kidney. Lower expression in lung, liver and heart.

The protein resides in the cell membrane. The protein localises to the lysosome membrane. Functionally, may be an inhibitor of SLC12A1. Seems to correspond to a subunit of a multimeric transport system and thus, additional subunits may be required for its function. May play a role in lysosomal ion flux and osmoregulation. The polypeptide is Solute carrier family 12 member 9 (SLC12A9) (Homo sapiens (Human)).